We begin with the raw amino-acid sequence, 301 residues long: Aquaporin NIP2-3 (301 aa).

2 helical membrane passes run 57–77 (VISEVVATFLLVFVTCGAASI) and 91–111 (SVAGGLIVTVMIYATGHISGA). An NPA 1 motif is present at residues 114 to 116 (NPA). Helical transmembrane passes span 132-154 (VPFYWAAQFTGAMCAAFVLKAVL), 172-192 (ALAIEIVVTFNMMFVTCAVAT), and 200-220 (LAGLAVGSAVCITSIFAGPVS). An NPA 2 motif is present at residues 225 to 227 (NPA). The chain crosses the membrane as a helical span at residues 238 to 258 (VFTGLWIYFLGPVVGTLSGAW).

It belongs to the MIP/aquaporin (TC 1.A.8) family. NIP (TC 1.A.8.12) subfamily.

The protein localises to the membrane. Functionally, aquaporins facilitate the transport of water and small neutral solutes across cell membranes. This is Aquaporin NIP2-3 (NIP2-3) from Zea mays (Maize).